We begin with the raw amino-acid sequence, 568 residues long: Type 2 DNA topoisomerase 6 subunit B (568 aa).

Residues Asn46, Asp78, 99 to 100 (TK), 109 to 116 (GQQGIGIS), and Lys473 contribute to the ATP site.

Belongs to the TOP6B family. As to quaternary structure, homodimer. Heterotetramer of two Top6A and two Top6B chains.

It catalyses the reaction ATP-dependent breakage, passage and rejoining of double-stranded DNA.. In terms of biological role, relaxes both positive and negative superturns and exhibits a strong decatenase activity. The protein is Type 2 DNA topoisomerase 6 subunit B of Pyrococcus furiosus (strain ATCC 43587 / DSM 3638 / JCM 8422 / Vc1).